The primary structure comprises 183 residues: Protein Syd (183 aa).

The protein belongs to the Syd family.

Its subcellular location is the cell inner membrane. Functionally, interacts with the SecY protein in vivo. May bind preferentially to an uncomplexed state of SecY, thus functioning either as a chelating agent for excess SecY in the cell or as a regulatory factor that negatively controls the translocase function. This Idiomarina loihiensis (strain ATCC BAA-735 / DSM 15497 / L2-TR) protein is Protein Syd.